Consider the following 283-residue polypeptide: MTDITTWIDEYHKGSRFGLNGKILFKKTSKYQEIIVIENEYYGKALMLDGCWMTSLKDEKYYHECLVHPALSSIDEKSNVLIIGGGDGGTVRECVKYSKISKIDLVEIDEEVIKISKKFLKEIAGEAWNDKRLEIHIDDGVKWVEKTKDNFYDVIFIDCSDPSEFSNLLFSHSFYKECERILAPSGILATQSESPESFKNIHINILKSLKNIFKVSETMYSFVPIYPSGIWSWTFASSEDLSLSKQNYDEVVKIEKGCEIWNLNFQNAAFKMMPNKIVKELDS.

A PABS domain is found at 5–238 (TTWIDEYHKG…GIWSWTFASS (234 aa)). Residue Q32 participates in S-methyl-5'-thioadenosine binding. H63 and D87 together coordinate spermidine. S-methyl-5'-thioadenosine-binding positions include E107 and 139 to 140 (DG). The active-site Proton acceptor is the D158. 158 to 161 (DCSD) serves as a coordination point for spermidine.

This sequence belongs to the spermidine/spermine synthase family. Homodimer or homotetramer.

The protein resides in the cytoplasm. The catalysed reaction is S-adenosyl 3-(methylsulfanyl)propylamine + putrescine = S-methyl-5'-thioadenosine + spermidine + H(+). Its pathway is amine and polyamine biosynthesis; spermidine biosynthesis; spermidine from putrescine: step 1/1. In terms of biological role, catalyzes the irreversible transfer of a propylamine group from the amino donor S-adenosylmethioninamine (decarboxy-AdoMet) to putrescine (1,4-diaminobutane) to yield spermidine. The polypeptide is Polyamine aminopropyltransferase (Prochlorococcus marinus (strain AS9601)).